Here is a 128-residue protein sequence, read N- to C-terminus: MKFSLVATIVLLALAQGSFAQGAADLESLGQYFEEMKTKLIQDMTEIIRSQDLANQAQAFVEDKKTQLQPLVAQIQEQMKTVATNVEEQIRPLTANVQAHLQPQIDNFQKQMEAIIKKLTDQTMAIEN.

The signal sequence occupies residues 1–20; sequence MKFSLVATIVLLALAQGSFA. The residue at position 21 (Q21) is a Pyrrolidone carboxylic acid.

This sequence belongs to the apolipoprotein A1/A4/E family.

The protein localises to the secreted. Antifreeze proteins lower the blood freezing point. This chain is Type-4 ice-structuring protein LS-12, found in Myoxocephalus octodecemspinosus (Longhorn sculpin).